We begin with the raw amino-acid sequence, 391 residues long: MSRFLICSFALVLLYPAGIDMYLVGLPRIAADLNASEAQLHIAFSVYLAGMAAAMLFAGKVADRSGRKPVAIPGAALFIIASVFCSLAETSTLFLAGRFLQGLGAGCCYVVAFAILRDTLDDRRRAKVLSLLNGITCIIPVLAPVLGHLIMLKFPWQSLFWTMATMGIAVLMLSLFILKETRPAAPAASDKPRENSESLLNRFFLSRVVITTLSVSVILTFVNTSPVLLMEIMGFERGEYATIMALTAGVSMTVSFSTPFALGIFKPRTLMITSQVLFLAAGITLAVSPSHAVSLFGITLICAGFSVGFGVAMSQALGPFSLRAGVASSTLGIAQVCGSSLWIWLAAVVGIGAWNMLIGILIACSIVSLLLIMFVAPGRPVAAHEEIHHHA.

Transmembrane regions (helical) follow at residues 4–24 (FLIC…MYLV), 42–62 (IAFS…GKVA), 69–89 (PVAI…SLAE), 93–113 (LFLA…VVAF), 131–151 (LLNG…HLIM), 158–178 (SLFW…LFIL), 203–222 (FFLS…LTFV), 245–265 (ALTA…LGIF), 269–289 (TLMI…AVSP), 293–313 (VSLF…GVAM), 331–351 (LGIA…VVGI), and 356–376 (MLIG…MFVA).

This sequence belongs to the major facilitator superfamily. DHA1 family. MdtL (TC 2.A.1.2.22) subfamily.

Its subcellular location is the cell inner membrane. In terms of biological role, confers resistance to chloramphenicol. The protein is Multidrug resistance protein MdtL of Escherichia coli (strain SMS-3-5 / SECEC).